The following is a 287-amino-acid chain: Large ribosomal subunit protein uL2 (287 aa).

The segment at 216–287 (RRPEVRGSVM…SKRGRGGRDA (72 aa)) is disordered. Residues 271-287 (QRRRRKSSKRGRGGRDA) show a composition bias toward basic residues.

It belongs to the universal ribosomal protein uL2 family. In terms of assembly, part of the 50S ribosomal subunit. Forms a bridge to the 30S subunit in the 70S ribosome.

One of the primary rRNA binding proteins. Required for association of the 30S and 50S subunits to form the 70S ribosome, for tRNA binding and peptide bond formation. It has been suggested to have peptidyltransferase activity; this is somewhat controversial. Makes several contacts with the 16S rRNA in the 70S ribosome. The protein is Large ribosomal subunit protein uL2 of Synechococcus sp. (strain ATCC 27144 / PCC 6301 / SAUG 1402/1) (Anacystis nidulans).